The sequence spans 340 residues: Insulin gene enhancer protein ISL-2B (340 aa).

LIM zinc-binding domains are found at residues 9 to 62 (CVGC…CKRD) and 71 to 125 (CAKC…RADH). Positions 172–231 (TTRVRTVLNEKQLHTLRTCYNANPRPDALMKEQLVEMTGLSPRVIRVWFQNKRCKDKKRT) form a DNA-binding region, homeobox. Residues 307–317 (ESGSMGNSSGS) are compositionally biased toward low complexity. Residues 307–340 (ESGSMGNSSGSDVTSLSSQLPDTPNSMVPSPMDT) form a disordered region. Polar residues predominate over residues 318–340 (DVTSLSSQLPDTPNSMVPSPMDT).

It localises to the nucleus. In terms of biological role, binds to one of the cis-acting domain of the insulin gene enhancer. May be involved in subtype specialization of primary motoneurons. This Oncorhynchus tshawytscha (Chinook salmon) protein is Insulin gene enhancer protein ISL-2B (isl2b).